A 209-amino-acid polypeptide reads, in one-letter code: Pyridoxine/pyridoxamine 5'-phosphate oxidase (209 aa).

Substrate-binding positions include 5-8 (REEY) and lysine 63. FMN contacts are provided by residues 58 to 63 (RVVLLK), 73 to 74 (FT), arginine 79, lysine 80, and glutamine 102. Substrate is bound by residues tyrosine 120, arginine 124, and serine 128. FMN-binding positions include 137–138 (QS) and tryptophan 181. 187–189 (RLH) is a binding site for substrate. Arginine 191 lines the FMN pocket.

This sequence belongs to the pyridoxamine 5'-phosphate oxidase family. Homodimer. FMN serves as cofactor.

The catalysed reaction is pyridoxamine 5'-phosphate + O2 + H2O = pyridoxal 5'-phosphate + H2O2 + NH4(+). It carries out the reaction pyridoxine 5'-phosphate + O2 = pyridoxal 5'-phosphate + H2O2. The protein operates within cofactor metabolism; pyridoxal 5'-phosphate salvage; pyridoxal 5'-phosphate from pyridoxamine 5'-phosphate: step 1/1. It functions in the pathway cofactor metabolism; pyridoxal 5'-phosphate salvage; pyridoxal 5'-phosphate from pyridoxine 5'-phosphate: step 1/1. Its function is as follows. Catalyzes the oxidation of either pyridoxine 5'-phosphate (PNP) or pyridoxamine 5'-phosphate (PMP) into pyridoxal 5'-phosphate (PLP). The chain is Pyridoxine/pyridoxamine 5'-phosphate oxidase from Alcanivorax borkumensis (strain ATCC 700651 / DSM 11573 / NCIMB 13689 / SK2).